Here is a 209-residue protein sequence, read N- to C-terminus: Ribosomal RNA large subunit methyltransferase E (209 aa).

Residues G63, W65, D83, D99, and D124 each contribute to the S-adenosyl-L-methionine site. The Proton acceptor role is filled by K164.

This sequence belongs to the class I-like SAM-binding methyltransferase superfamily. RNA methyltransferase RlmE family.

Its subcellular location is the cytoplasm. The enzyme catalyses uridine(2552) in 23S rRNA + S-adenosyl-L-methionine = 2'-O-methyluridine(2552) in 23S rRNA + S-adenosyl-L-homocysteine + H(+). Its function is as follows. Specifically methylates the uridine in position 2552 of 23S rRNA at the 2'-O position of the ribose in the fully assembled 50S ribosomal subunit. This is Ribosomal RNA large subunit methyltransferase E from Proteus mirabilis (strain HI4320).